A 26-amino-acid chain; its full sequence is M-lycotoxin-Ls2a (26 aa).

In terms of tissue distribution, expressed by the venom gland.

Its subcellular location is the secreted. It localises to the target cell membrane. Forms pore that permeabilize the cell membrane. Promotes efflux of calcium from synaptosomes, causes hemolysis, and dissipates voltage gradients across muscle membrane. Potently inhibits the growth of bacteria and yeast. May function both in the prey capture strategy as well as protection from infectious organisms arising from prey ingestion. The sequence is that of M-lycotoxin-Ls2a from Lycosa singoriensis (Wolf spider).